A 403-amino-acid polypeptide reads, in one-letter code: S-arrestin (403 aa).

The segment at 11–19 (HVIFKKVSR) is interaction with RHO. Phosphothreonine is present on Thr-231. The interval 381-403 (RQNLKDTGENTEGKKDEDAGQDE) is disordered.

It belongs to the arrestin family. As to quaternary structure, monomer. Homodimer. Homotetramer. Interacts with RHO (via the phosphorylated C-terminus). Detected in retina (at protein level).

It localises to the cell projection. The protein resides in the cilium. It is found in the photoreceptor outer segment. Its subcellular location is the membrane. Binds to photoactivated, phosphorylated RHO and terminates RHO signaling via G-proteins by competing with G-proteins for the same binding site on RHO. May play a role in preventing light-dependent degeneration of retinal photoreceptor cells. The protein is S-arrestin (Sag) of Mus musculus (Mouse).